A 538-amino-acid polypeptide reads, in one-letter code: Putative ABC1 protein At2g40090 (538 aa).

An N-terminal signal peptide occupies residues Met-1–Ala-26.

The protein belongs to the protein kinase superfamily. ADCK protein kinase family.

The chain is Putative ABC1 protein At2g40090 from Arabidopsis thaliana (Mouse-ear cress).